A 42-amino-acid chain; its full sequence is Photosystem I reaction center subunit IX (42 aa).

Residues 7 to 27 (YLSTAPVLATLWFGFLAGLLI) form a helical membrane-spanning segment.

It belongs to the PsaJ family.

The protein localises to the plastid. It localises to the chloroplast thylakoid membrane. In terms of biological role, may help in the organization of the PsaE and PsaF subunits. The protein is Photosystem I reaction center subunit IX of Huperzia lucidula (Shining clubmoss).